The primary structure comprises 268 residues: E3 ubiquitin-protein ligase IAP-3 (268 aa).

BIR repeat units lie at residues lysine 18–valine 84 and glutamate 111–valine 178. Zn(2+)-binding residues include cysteine 148, cysteine 151, histidine 168, and cysteine 175. The RING-type zinc-finger motif lies at cysteine 221–arginine 256.

This sequence belongs to the IAP family. Post-translationally, auto-ubiquitinated.

It catalyses the reaction S-ubiquitinyl-[E2 ubiquitin-conjugating enzyme]-L-cysteine + [acceptor protein]-L-lysine = [E2 ubiquitin-conjugating enzyme]-L-cysteine + N(6)-ubiquitinyl-[acceptor protein]-L-lysine.. In terms of biological role, RING-finger E3 ubiquitin ligase required to prevent cellular apoptosis in infected cells. Ubiquitinates and subsequently targets host pro-apoptotic cellular proteins such as HID for degradation by the proteasome. The chain is E3 ubiquitin-protein ligase IAP-3 (IAP3) from Orgyia pseudotsugata multicapsid polyhedrosis virus (OpMNPV).